The sequence spans 888 residues: Alanine--tRNA ligase (888 aa).

Histidine 573, histidine 577, cysteine 676, and histidine 680 together coordinate Zn(2+).

Belongs to the class-II aminoacyl-tRNA synthetase family. Zn(2+) is required as a cofactor.

The protein localises to the cytoplasm. It catalyses the reaction tRNA(Ala) + L-alanine + ATP = L-alanyl-tRNA(Ala) + AMP + diphosphate. Its function is as follows. Catalyzes the attachment of alanine to tRNA(Ala) in a two-step reaction: alanine is first activated by ATP to form Ala-AMP and then transferred to the acceptor end of tRNA(Ala). Also edits incorrectly charged Ser-tRNA(Ala) and Gly-tRNA(Ala) via its editing domain. This is Alanine--tRNA ligase from Corynebacterium glutamicum (strain ATCC 13032 / DSM 20300 / JCM 1318 / BCRC 11384 / CCUG 27702 / LMG 3730 / NBRC 12168 / NCIMB 10025 / NRRL B-2784 / 534).